The following is a 432-amino-acid chain: Glutamate--cysteine ligase EgtA (432 aa).

The protein belongs to the glutamate--cysteine ligase type 2 family. EgtA subfamily.

It carries out the reaction L-cysteine + L-glutamate + ATP = gamma-L-glutamyl-L-cysteine + ADP + phosphate + H(+). The protein operates within amino-acid biosynthesis; ergothioneine biosynthesis. Functionally, catalyzes the synthesis of gamma-glutamylcysteine (gamma-GC) which is used as substrate for the biosynthesis of the low-molecular thiol compound ergothioneine (ERG). ERG is one of the major redox buffers which protects bacteria against redox stressors and antibiotics; loss of ERG or mycothiol (MSH, the other major redox buffer in this bacteria) leads to respiratory alterations and bioenergetic deficiencies that negatively impact virulence. In Mycobacterium tuberculosis (strain CDC 1551 / Oshkosh), this protein is Glutamate--cysteine ligase EgtA (egtA).